The following is a 236-amino-acid chain: Small ribosomal subunit protein uS2c (236 aa).

The protein belongs to the universal ribosomal protein uS2 family.

The protein localises to the plastid. It is found in the chloroplast. The polypeptide is Small ribosomal subunit protein uS2c (rps2) (Coffea arabica (Arabian coffee)).